A 1169-amino-acid polypeptide reads, in one-letter code: Protein MBD-R2 (1169 aa).

The THAP-type zinc finger occupies Cys-5 to His-59. Disordered stretches follow at residues Arg-99–Asp-122, Ser-140–Asn-211, and Ala-347–Gln-394. Polar residues predominate over residues Glu-107–Asp-122. Residues Ser-140–Asn-160 show a composition bias toward basic and acidic residues. Over residues Pro-190 to Leu-202 the composition is skewed to low complexity. Residues Lys-353–Ser-363 are compositionally biased toward polar residues. In terms of domain architecture, MBD spans Lys-445–Arg-514. Residues Gly-527–Lys-565 form a disordered region. Positions Ser-542–Ser-559 are enriched in polar residues. The C2H2-type zinc-finger motif lies at Tyr-640–His-665. The disordered stretch occupies residues Gln-714–Ala-890. A compositionally biased stretch (low complexity) spans Ser-726 to Thr-742. The span at Pro-774–Arg-784 shows a compositional bias: polar residues. Positions Ser-798–Arg-810 are enriched in basic residues. 2 stretches are compositionally biased toward polar residues: residues Ala-853–Asp-862 and Ser-869–Ile-881.

Component of the non-specific lethal (NLS) histone acetyltransferase complex at least composed of mof, nls1, dgt1/NSL2, Rcd1/NSL3, Rcd5/MCRS2, MBD-R2 and wds.

The protein resides in the nucleus. It localises to the chromosome. In terms of biological role, component of the non-specific lethal (NLS) complex, a multiprotein complex that promotes expression of housekeeping genes on X chromosome and autosomes. This is Protein MBD-R2 from Drosophila melanogaster (Fruit fly).